Here is a 376-residue protein sequence, read N- to C-terminus: Alpha-centractin (376 aa).

At Met-1 the chain carries N-acetylmethionine.

This sequence belongs to the actin family. ARP1 subfamily. As to quaternary structure, part of the ACTR1A/ACTB filament around which the dynactin complex is built. The filament contains 8 copies of ACTR1A and 1 ACTB. Interacts with dynein and adapters such as BICD2. Interacts with BCCIP (isoform 2/alpha).

Its subcellular location is the cytoplasm. It localises to the cytoskeleton. It is found in the microtubule organizing center. The protein localises to the centrosome. The protein resides in the cell cortex. Its function is as follows. Part of the ACTR1A/ACTB filament around which the dynactin complex is built. The dynactin multiprotein complex activates the molecular motor dynein for ultra-processive transport along microtubules. The polypeptide is Alpha-centractin (ACTR1A) (Canis lupus familiaris (Dog)).